Here is a 344-residue protein sequence, read N- to C-terminus: L-rhamnose-proton symporter (344 aa).

A run of 10 helical transmembrane segments spans residues 5–25 (ILLG…FYAP), 38–58 (WAIA…YWLL), 72–92 (ILLP…GYGL), 101–121 (MGIG…TPII), 137–157 (TLIG…AGLL), 175–195 (LALA…MSAA), 214–234 (LPSY…FCII), 259–279 (ILFS…YAWG), 289–309 (FMSW…VGLL), and 323–343 (VLCI…LGMA).

Belongs to the L-rhamnose transporter (TC 2.A.7.6) family.

It is found in the cell inner membrane. It catalyses the reaction L-rhamnopyranose(in) + H(+)(in) = L-rhamnopyranose(out) + H(+)(out). Its function is as follows. Uptake of L-rhamnose across the cytoplasmic membrane with the concomitant transport of protons into the cell (symport system). This chain is L-rhamnose-proton symporter, found in Mannheimia succiniciproducens (strain KCTC 0769BP / MBEL55E).